The primary structure comprises 362 residues: MRDETPERPAPLRFGYTTGSCATATSLAAARLLLTGRADDAVEIVLPKGQRVMMRLEFCRATADGAEAGTIKDAGDDPDVTHGALIFARVALGGARGVRFHAGPGVGTVTRAGLALPIGEPAINPVPRQMMTTHLDALAAEQGYTGGFDVTIGVEGGEALALKTMNPRLGIVGGLSILGTTGIVRPFSCSAYIASIHQGIDVARANGVAHIAACTGNASEDAMRAHYGLPDIALIEMGDFAGAVLKHLRRAPVARLSMCGGFGKLSKLAAGHLDLHSRHSSIDLPLLAQWARDAGASDALQAAIRAANTSVEALALAGADGVPLGDVVCAHALRVARDIVPASVAVEMFAIDRQGRFVGSAR.

This sequence belongs to the CbiD family.

It carries out the reaction Co-precorrin-5B + S-adenosyl-L-methionine = Co-precorrin-6A + S-adenosyl-L-homocysteine. The protein operates within cofactor biosynthesis; adenosylcobalamin biosynthesis; cob(II)yrinate a,c-diamide from sirohydrochlorin (anaerobic route): step 6/10. In terms of biological role, catalyzes the methylation of C-1 in cobalt-precorrin-5B to form cobalt-precorrin-6A. The chain is Cobalt-precorrin-5B C(1)-methyltransferase from Burkholderia multivorans (strain ATCC 17616 / 249).